A 233-amino-acid polypeptide reads, in one-letter code: MSVVTSIRKSLVPIHREGYPFIAIAVVIALGLMVFSTFLGMIGVGLAIWTALFFRDPPRVTPVRDGLVVAPADGRISQVGLARPPRELDLSDEPLLRVSIFMNVFNVHVNRAPVTGRIERLAYKPGLFLNADLDKASEDNERNGLVISTPLCRVGVVQIAGLIARRIVSFVREGESIGVGERFGLIRFGSRVDVYLPVGTRVLVSEGQLTVAGETVLCDLSAQQPRETAYRVS.

The Schiff-base intermediate with substrate; via pyruvic acid role is filled by S190. S190 carries the pyruvic acid (Ser); by autocatalysis modification.

This sequence belongs to the phosphatidylserine decarboxylase family. PSD-A subfamily. Heterodimer of a large membrane-associated beta subunit and a small pyruvoyl-containing alpha subunit. Pyruvate is required as a cofactor. Post-translationally, is synthesized initially as an inactive proenzyme. Formation of the active enzyme involves a self-maturation process in which the active site pyruvoyl group is generated from an internal serine residue via an autocatalytic post-translational modification. Two non-identical subunits are generated from the proenzyme in this reaction, and the pyruvate is formed at the N-terminus of the alpha chain, which is derived from the carboxyl end of the proenzyme. The post-translation cleavage follows an unusual pathway, termed non-hydrolytic serinolysis, in which the side chain hydroxyl group of the serine supplies its oxygen atom to form the C-terminus of the beta chain, while the remainder of the serine residue undergoes an oxidative deamination to produce ammonia and the pyruvoyl prosthetic group on the alpha chain.

It localises to the cell membrane. The catalysed reaction is a 1,2-diacyl-sn-glycero-3-phospho-L-serine + H(+) = a 1,2-diacyl-sn-glycero-3-phosphoethanolamine + CO2. It functions in the pathway phospholipid metabolism; phosphatidylethanolamine biosynthesis; phosphatidylethanolamine from CDP-diacylglycerol: step 2/2. Its function is as follows. Catalyzes the formation of phosphatidylethanolamine (PtdEtn) from phosphatidylserine (PtdSer). The sequence is that of Phosphatidylserine decarboxylase proenzyme from Xanthobacter autotrophicus (strain ATCC BAA-1158 / Py2).